The primary structure comprises 458 residues: MILAVIGINHETASVETREQLAFSSKQVKELVQKLIEGQPIKEASVLSTCNRTEVHFTVNTGQIEAGKNHIMTYLSDFSDLDPREYVDHLYFITDQEAVSHIFKVTAGLNSLVTGETEILGQVKKAYQLSDEAGGVDSIFHGLYQQALRTGKRVHRETGINDNAASVSYASVELATKIFGSLQNRRALIIGAGKMSELAARHLYSNGVKDVIVINRTIERAKNLADKFGGLYASYDQLSEWLNEIDIVITSTGAPHFVIKEEQIKRAMKSRKYSPMFLIDIAVPRDVEPSVNNQDNAYLYTIDDLEAVVESNMQERQEEARNAELIISEEVAEFMVWYKTRDVVPLISALREKAEDVRKMELEKYHKKLKNLSPKEQEAVDKLTKSIVNKILKEPVLRIKEFAVEDKSELYMATLAQLFDLEDEVIPKDGEEHSSSKEVESVTQSSTERGHHESDFHN.

Substrate-binding positions include 49–52 (TCNR), Ser-111, 116–118 (ETE), and Gln-122. Cys-50 acts as the Nucleophile in catalysis. 191 to 196 (GAGKMS) is a binding site for NADP(+). Composition is skewed to basic and acidic residues over residues 426-440 (IPKD…KEVE) and 448-458 (ERGHHESDFHN). The segment at 426–458 (IPKDGEEHSSSKEVESVTQSSTERGHHESDFHN) is disordered.

Belongs to the glutamyl-tRNA reductase family. As to quaternary structure, homodimer.

The enzyme catalyses (S)-4-amino-5-oxopentanoate + tRNA(Glu) + NADP(+) = L-glutamyl-tRNA(Glu) + NADPH + H(+). It functions in the pathway porphyrin-containing compound metabolism; protoporphyrin-IX biosynthesis; 5-aminolevulinate from L-glutamyl-tRNA(Glu): step 1/2. Catalyzes the NADPH-dependent reduction of glutamyl-tRNA(Glu) to glutamate 1-semialdehyde (GSA). The protein is Glutamyl-tRNA reductase of Natranaerobius thermophilus (strain ATCC BAA-1301 / DSM 18059 / JW/NM-WN-LF).